The primary structure comprises 303 residues: MAVSLREYRARIKSTESMKKITRAMELIAASRIIKAQQRAQSAAPYARELTRAVSAVATYSNVDHPLTREPENSQRVAMLIVTSDRGLAGAYSSSVLKEAERLAEKLRGEGKTIDVYLCGRKGEAYHRFRNRPVVRSWTGFSDQPSYDAALEVGTTLIDAFLDEEGEHAVDEVHVVYTRFRSMLLQEPTAVRLLPLEVVEGEERPASDEVLPLYEFEPSAEAVLDNLLPQYVQSRIFFAFLQAAASELAARQKAMKSATDNADELIKKYTRIANQARQAGITQEISEIVGGVNALADAQAGSE.

Belongs to the ATPase gamma chain family. F-type ATPases have 2 components, CF(1) - the catalytic core - and CF(0) - the membrane proton channel. CF(1) has five subunits: alpha(3), beta(3), gamma(1), delta(1), epsilon(1). CF(0) has three main subunits: a, b and c.

The protein resides in the cell membrane. In terms of biological role, produces ATP from ADP in the presence of a proton gradient across the membrane. The gamma chain is believed to be important in regulating ATPase activity and the flow of protons through the CF(0) complex. The chain is ATP synthase gamma chain from Nocardioides sp. (strain ATCC BAA-499 / JS614).